The sequence spans 281 residues: Cell division protein DivIB (281 aa).

The disordered stretch occupies residues 1–36; that stretch reads MARKRITRRDPEEELSKFLRHEPGQGQETRKLSSQL. The Cytoplasmic segment spans residues 1–46; sequence MARKRITRRDPEEELSKFLRHEPGQGQETRKLSSQLTSLKKERRRG. A compositionally biased stretch (basic and acidic residues) spans 8 to 31; sequence RRDPEEELSKFLRHEPGQGQETRK. The chain crosses the membrane as a helical span at residues 47 to 69; it reads LLTRLGSIMAVCLLAIAFLTYYV. The Extracellular segment spans residues 70–281; the sequence is SPLADVSTVR…SAEKKAYGLS (212 aa). Residues 73–144 enclose the POTRA domain; it reads ADVSTVRVLG…NTLNMQVHER (72 aa).

It belongs to the FtsQ/DivIB family. DivIB subfamily.

The protein resides in the cell membrane. Cell division protein that may be involved in stabilizing or promoting the assembly of the division complex. This Lactobacillus delbrueckii subsp. bulgaricus (strain ATCC 11842 / DSM 20081 / BCRC 10696 / JCM 1002 / NBRC 13953 / NCIMB 11778 / NCTC 12712 / WDCM 00102 / Lb 14) protein is Cell division protein DivIB.